A 218-amino-acid chain; its full sequence is ATP-dependent dethiobiotin synthetase BioD (218 aa).

10 to 15 (NAGKTT) provides a ligand contact to ATP. Thr-14 contacts Mg(2+). The active site involves Lys-35. A substrate-binding site is contributed by Thr-39. Mg(2+) contacts are provided by His-52 and Glu-116. ATP contacts are provided by residues 116–119 (EGAG) and 176–177 (LR).

The protein belongs to the dethiobiotin synthetase family. As to quaternary structure, homodimer. Mg(2+) serves as cofactor.

It localises to the cytoplasm. The catalysed reaction is (7R,8S)-7,8-diammoniononanoate + CO2 + ATP = (4R,5S)-dethiobiotin + ADP + phosphate + 3 H(+). The protein operates within cofactor biosynthesis; biotin biosynthesis; biotin from 7,8-diaminononanoate: step 1/2. Its function is as follows. Catalyzes a mechanistically unusual reaction, the ATP-dependent insertion of CO2 between the N7 and N8 nitrogen atoms of 7,8-diaminopelargonic acid (DAPA, also called 7,8-diammoniononanoate) to form a ureido ring. The protein is ATP-dependent dethiobiotin synthetase BioD of Helicobacter pylori (strain Shi470).